Here is a 221-residue protein sequence, read N- to C-terminus: Adenylate kinase (221 aa).

10–15 (GAGKGT) provides a ligand contact to ATP. The interval 30-59 (STGDMLRAAVKAGTPLGIEAKKVMDAGGLV) is NMP. AMP contacts are provided by residues T31, R36, 57–59 (GLV), 85–88 (GFPR), and Q92. The LID stretch occupies residues 122 to 159 (GRRVHVASGRTYHVKFNPPKADMVDDETGEALIQRDDD). ATP-binding positions include R123 and 132 to 133 (TY). The AMP site is built by R156 and R167. G207 is a binding site for ATP.

This sequence belongs to the adenylate kinase family. As to quaternary structure, monomer.

The protein resides in the cytoplasm. It carries out the reaction AMP + ATP = 2 ADP. It functions in the pathway purine metabolism; AMP biosynthesis via salvage pathway; AMP from ADP: step 1/1. Catalyzes the reversible transfer of the terminal phosphate group between ATP and AMP. Plays an important role in cellular energy homeostasis and in adenine nucleotide metabolism. The sequence is that of Adenylate kinase from Cupriavidus metallidurans (strain ATCC 43123 / DSM 2839 / NBRC 102507 / CH34) (Ralstonia metallidurans).